The chain runs to 2181 residues: Non-reducing polyketide synthase subA (2181 aa).

An N-terminal acylcarrier protein transacylase domain (SAT) region spans residues 74-180 (QWVKGNSTQP…LALCCGAYID (107 aa)). One can recognise a Ketosynthase family 3 (KS3) domain in the interval 347 to 779 (QAQLLVLGPV…GTNAAMLVCQ (433 aa)). Active-site for beta-ketoacyl synthase activity residues include cysteine 525, histidine 661, and histidine 702. The segment at 891–1193 (VLAGQTGRRV…SFYPAALGEP (303 aa)) is malonyl-CoA:ACP transacylase (MAT) domain. Residue serine 977 is the For acyl/malonyl transferase activity of the active site. The N-terminal hotdog fold stretch occupies residues 1269–1401 (VSLIGKTQNA…GVITLQEVYS (133 aa)). A PKS/mFAS DH domain is found at 1269–1579 (VSLIGKTQNA…FQKIAISSLK (311 aa)). The segment at 1276 to 1573 (QNAGVQTVEY…TILGAKFQKI (298 aa)) is product template (PT) domain. The C-terminal hotdog fold stretch occupies residues 1425-1579 (SASVVQGDFI…FQKIAISSLK (155 aa)). Residues 1652–1673 (ISGSSRSTSSSPPSLESRSQAM) form a disordered region. Residues 1653-1670 (SGSSRSTSSSPPSLESRS) show a composition bias toward low complexity. The Carrier domain occupies 1677–1753 (EITEGAGSAL…TLFHTIFPQQ (77 aa)). Serine 1713 carries the post-translational modification O-(pantetheine 4'-phosphoryl)serine. Residues 1982–2164 (EFMNCLFSYN…QSGFGHVDWT (183 aa)) are methyltransferase (CMeT) domain.

The protein operates within secondary metabolite biosynthesis; terpenoid biosynthesis. Non-reducing polyketide synthase; part of the gene cluster that mediates the biosynthesis of the immunosuppressants subglutinols, meroterpenoids consisting of an alpha-pyrone (4-hydroxy-5,6-dimethyl-2-pyrone) moiety attached to a decalin core fused to a five-membered cyclic ether carrying a prenylside chain. The first step of the pathway is the synthesis of the alpha-pyrone moiety by the polyketide synthase subA via condensation of one acetyl-CoA starter unit with 3 malonyl-CoA units and 2 methylations. The alpha-pyrone is then combined with geranylgeranyl pyrophosphate (GGPP) formed by the GGPP synthase subD through the action of the prenyltransferase subC to yield a linear alpha-pyrone diterpenoid. Subsequent steps in the subglutinol biosynthetic pathway involve the decalin core formation, which is thought to be initiated by the epoxidation of the C10-C11 olefin by the FAD-dependent oxidoreductase subE. The following cyclization cascade would be catalyzed by the terpene cyclase subB. Lastly, the FAD-dependent dehydrogenase subF probably catalyzes the five-membered cyclic ether formation to complete the formation of subglutinol A. Subsequent redox reactions appear to give rise to subglutinol C and D, however, it remains unclear which enzymes are responsible for these transformations. SubD may have secondary function in the conversion of the identified subglutinols to subglutinol analog 45, which seems to be the major product of the cluster. The sequence is that of Non-reducing polyketide synthase subA from Metarhizium robertsii (strain ARSEF 23 / ATCC MYA-3075) (Metarhizium anisopliae (strain ARSEF 23)).